Here is a 310-residue protein sequence, read N- to C-terminus: Olfactory receptor 4C11 (310 aa).

Residues 1–23 are Extracellular-facing; that stretch reads MQQNNSVPEFILLGLTQDPLRQK. Asparagine 4 is a glycosylation site (N-linked (GlcNAc...) asparagine). The helical transmembrane segment at 24–47 threads the bilayer; that stretch reads IVFVIFLIFYMGTVVGNMLIIVTI. Residues 48–55 are Cytoplasmic-facing; it reads KSSRTLGS. Residues 56–77 form a helical membrane-spanning segment; the sequence is PMYFFLFYLSFADSCFSTSTAP. The Extracellular segment spans residues 78–98; the sequence is RLIVDALSEKKIITYNECMTQ. Cysteine 95 and cysteine 187 form a disulfide bridge. A helical transmembrane segment spans residues 99–118; the sequence is VFALHLFGCMEIFVLILMAV. Topologically, residues 119–137 are cytoplasmic; the sequence is DRYVAICKPLRYPTIMSQQ. Residues 138-156 form a helical membrane-spanning segment; sequence VCIILIVLAWIGSLIHSTA. At 157 to 193 the chain is on the extracellular side; that stretch reads QIILALRLPFCGPYLIDHYCCDLQPLLKLACMDTYMI. Residues 194 to 217 form a helical membrane-spanning segment; it reads NLLLVSNSGAICSSSFMILIISYI. Residues 218–233 are Cytoplasmic-facing; that stretch reads VILHSLRNHSAKGKKK. The chain crosses the membrane as a helical span at residues 234–256; sequence ALSACTSHIIVVILFFGPCIFIY. The Extracellular portion of the chain corresponds to 257–267; it reads TRPPTTFPMDK. Residues 268-287 traverse the membrane as a helical segment; that stretch reads MVAVFYTIGTPFLNPLIYTL. Topologically, residues 288–310 are cytoplasmic; sequence RNAEVKNAMRKLWHGKIISENKG.

It belongs to the G-protein coupled receptor 1 family.

The protein localises to the cell membrane. In terms of biological role, odorant receptor. The sequence is that of Olfactory receptor 4C11 (OR4C11) from Homo sapiens (Human).